A 51-amino-acid chain; its full sequence is Large ribosomal subunit protein eL39 (51 aa).

The tract at residues 1–23 (MPSQKSFRTKQKLAKAQKQNRPL) is disordered.

Belongs to the eukaryotic ribosomal protein eL39 family. Component of the large ribosomal subunit. Mature ribosomes consist of a small (40S) and a large (60S) subunit. The 40S subunit contains about 32 different proteins and 1 molecule of RNA (18S). The 60S subunit contains 45 different proteins and 3 molecules of RNA (25S, 5.8S and 5S).

The protein localises to the cytoplasm. Its function is as follows. Component of the ribosome, a large ribonucleoprotein complex responsible for the synthesis of proteins in the cell. The small ribosomal subunit (SSU) binds messenger RNAs (mRNAs) and translates the encoded message by selecting cognate aminoacyl-transfer RNA (tRNA) molecules. The large subunit (LSU) contains the ribosomal catalytic site termed the peptidyl transferase center (PTC), which catalyzes the formation of peptide bonds, thereby polymerizing the amino acids delivered by tRNAs into a polypeptide chain. The nascent polypeptides leave the ribosome through a tunnel in the LSU and interact with protein factors that function in enzymatic processing, targeting, and the membrane insertion of nascent chains at the exit of the ribosomal tunnel. The polypeptide is Large ribosomal subunit protein eL39 (Candida albicans (strain SC5314 / ATCC MYA-2876) (Yeast)).